Reading from the N-terminus, the 144-residue chain is Large ribosomal subunit protein uL15 (144 aa).

Positions Met1 to Ala58 are disordered. Positions Arg21–Gly31 are enriched in gly residues.

It belongs to the universal ribosomal protein uL15 family. In terms of assembly, part of the 50S ribosomal subunit.

In terms of biological role, binds to the 23S rRNA. This Marinobacter nauticus (strain ATCC 700491 / DSM 11845 / VT8) (Marinobacter aquaeolei) protein is Large ribosomal subunit protein uL15.